The chain runs to 104 residues: uncharacterized protein (104 aa).

The disordered stretch occupies residues 62-92 (SSPAASSHPRKRGKEKKERTPTERLAAPARK).

This is an uncharacterized protein from Human adenovirus B serotype 7 (HAdV-7).